A 356-amino-acid polypeptide reads, in one-letter code: Probable neutral protease 2 homolog ARB_04769 (356 aa).

Positions 1–17 are cleaved as a signal peptide; the sequence is MQFTALLAALGAPLALA. The propeptide occupies 18 to 183; that stretch reads ASIPAAAHNH…DDSTGVIDKR (166 aa). 2 disulfide bridges follow: Cys-191–Cys-262 and Cys-269–Cys-287. N-linked (GlcNAc...) asparagine glycosylation is present at Asn-205. His-311 is a binding site for Zn(2+). Glu-312 is an active-site residue. Residues His-315 and Asp-326 each contribute to the Zn(2+) site.

The protein belongs to the peptidase M35 family. It depends on Zn(2+) as a cofactor.

It localises to the secreted. The enzyme catalyses Preferential cleavage of bonds with hydrophobic residues in P1'. Also 3-Asn-|-Gln-4 and 8-Gly-|-Ser-9 bonds in insulin B chain.. Functionally, probable secreted metalloprotease that shows high activities on basic nuclear substrates such as histone and protamine. May be involved in virulence. The sequence is that of Probable neutral protease 2 homolog ARB_04769 from Arthroderma benhamiae (strain ATCC MYA-4681 / CBS 112371) (Trichophyton mentagrophytes).